The sequence spans 385 residues: 8-amino-7-oxononanoate synthase (385 aa).

Arg-21 is a substrate binding site. Residue 108 to 109 (GF) coordinates pyridoxal 5'-phosphate. His-133 lines the substrate pocket. Ser-179, His-207, and Thr-233 together coordinate pyridoxal 5'-phosphate. Position 236 is an N6-(pyridoxal phosphate)lysine (Lys-236). Residue Thr-352 coordinates substrate.

The protein belongs to the class-II pyridoxal-phosphate-dependent aminotransferase family. BioF subfamily. As to quaternary structure, homodimer. The cofactor is pyridoxal 5'-phosphate.

The catalysed reaction is 6-carboxyhexanoyl-[ACP] + L-alanine + H(+) = (8S)-8-amino-7-oxononanoate + holo-[ACP] + CO2. The protein operates within cofactor biosynthesis; biotin biosynthesis. Its function is as follows. Catalyzes the decarboxylative condensation of pimeloyl-[acyl-carrier protein] and L-alanine to produce 8-amino-7-oxononanoate (AON), [acyl-carrier protein], and carbon dioxide. This chain is 8-amino-7-oxononanoate synthase, found in Salmonella newport (strain SL254).